We begin with the raw amino-acid sequence, 1675 residues long: Coadhesin (1675 aa).

At 1-1356 (QGNYYSYGGT…TIADQADAAK (1356 aa)) the chain is on the extracellular side. In terms of domain architecture, F5/8 type C 1 spans 11 to 160 (TPGTPIGCTN…ICMRVGVESC (150 aa)). TSP type-1 domains are found at residues 168–220 (NGAW…NDCV), 224–279 (NGGW…QFCP), 281–336 (DGGW…QCCP), 338–393 (HGGW…QTCP), 403–458 (NGNY…IPCP), 460–515 (NGNW…TACP), and 517–572 (DGGW…GPCP). 21 disulfide bridges follow: Cys180/Cys216, Cys184/Cys219, Cys194/Cys206, Cys236/Cys273, Cys240/Cys278, Cys251/Cys263, Cys293/Cys330, Cys297/Cys335, Cys308/Cys320, Cys350/Cys387, Cys354/Cys392, Cys365/Cys377, Cys415/Cys452, Cys419/Cys457, Cys430/Cys442, Cys472/Cys509, Cys476/Cys514, Cys487/Cys499, Cys528/Cys566, Cys532/Cys571, and Cys543/Cys555. Residues 567–588 (NKGPCPTSPPTISPPTTGSPAD) are disordered. VWFA domains are found at residues 595-769 (DLVF…MDRI), 778-958 (DIGF…FKAL), and 966-1141 (DLTF…ISII). The 55-residue stretch at 1144 to 1198 (PSGLSKWSSWSACSKTCRYLGKAGTQIRTRDCKIPELGCDGMRIDTVECNKMDCE) folds into the TSP type-1 8 domain. 3 disulfides stabilise this stretch: Cys1156–Cys1192, Cys1160–Cys1197, and Cys1175–Cys1182. An F5/8 type C 2 domain is found at 1192 to 1336 (CNKMDCEGCG…PCMQAAVFGC (145 aa)). A helical transmembrane segment spans residues 1357–1377 (GILIVLWILAGILTFLLLMAC). Over 1378–1675 (CYYCCWHVCC…RGEEWYSRWG (298 aa)) the chain is Cytoplasmic. Residues 1463–1480 (EKHVTAEDVKSEKPKYSE) are compositionally biased toward basic and acidic residues. The interval 1463-1491 (EKHVTAEDVKSEKPKYSEEASSGTIKSGS) is disordered. Residues 1481 to 1491 (EASSGTIKSGS) are compositionally biased toward polar residues.

Component of the acid-insoluble and acid-soluble organic matrix of the aragonitic skeleton (at protein level).

It is found in the membrane. The polypeptide is Coadhesin (Acropora millepora (Staghorn coral)).